Here is a 433-residue protein sequence, read N- to C-terminus: Enolase (433 aa).

Gln167 provides a ligand contact to (2R)-2-phosphoglycerate. Glu209 functions as the Proton donor in the catalytic mechanism. Residues Asp246, Glu291, and Asp318 each coordinate Mg(2+). (2R)-2-phosphoglycerate-binding residues include Lys343, Arg372, Ser373, and Lys394. The active-site Proton acceptor is the Lys343.

It belongs to the enolase family. As to quaternary structure, component of the RNA degradosome, a multiprotein complex involved in RNA processing and mRNA degradation. It depends on Mg(2+) as a cofactor.

It is found in the cytoplasm. Its subcellular location is the secreted. The protein localises to the cell surface. The enzyme catalyses (2R)-2-phosphoglycerate = phosphoenolpyruvate + H2O. Its pathway is carbohydrate degradation; glycolysis; pyruvate from D-glyceraldehyde 3-phosphate: step 4/5. Functionally, catalyzes the reversible conversion of 2-phosphoglycerate (2-PG) into phosphoenolpyruvate (PEP). It is essential for the degradation of carbohydrates via glycolysis. The chain is Enolase from Haemophilus ducreyi (strain 35000HP / ATCC 700724).